The primary structure comprises 360 residues: Chorismate synthase (360 aa).

NADP(+) is bound at residue arginine 47. Residues 124-126 (RSS), 240-241 (NA), glycine 285, 300-304 (KPVAT), and arginine 326 contribute to the FMN site.

The protein belongs to the chorismate synthase family. Homotetramer. FMNH2 is required as a cofactor.

The enzyme catalyses 5-O-(1-carboxyvinyl)-3-phosphoshikimate = chorismate + phosphate. It functions in the pathway metabolic intermediate biosynthesis; chorismate biosynthesis; chorismate from D-erythrose 4-phosphate and phosphoenolpyruvate: step 7/7. Its function is as follows. Catalyzes the anti-1,4-elimination of the C-3 phosphate and the C-6 proR hydrogen from 5-enolpyruvylshikimate-3-phosphate (EPSP) to yield chorismate, which is the branch point compound that serves as the starting substrate for the three terminal pathways of aromatic amino acid biosynthesis. This reaction introduces a second double bond into the aromatic ring system. This chain is Chorismate synthase, found in Cytophaga hutchinsonii (strain ATCC 33406 / DSM 1761 / CIP 103989 / NBRC 15051 / NCIMB 9469 / D465).